The following is a 633-amino-acid chain: Breast carcinoma-amplified sequence 1 homolog (633 aa).

Disordered regions lie at residues 1 to 34 (MGNQ…CVQN) and 57 to 422 (SSKD…KLFW). 2 stretches are compositionally biased toward polar residues: residues 24–34 (KVTSDNECVQN) and 57–68 (SSKDNVATSSPK). Residue serine 127 is modified to Phosphoserine. Polar residues predominate over residues 278 to 288 (VDTTENSSSIM). Residues 300 to 318 (TETKKDPEDTKATKADSVC) show a composition bias toward basic and acidic residues. Residue serine 328 is modified to Phosphoserine. At threonine 330 the chain carries Phosphothreonine. Positions 359-378 (NSPTTSANLKSDKANFTPQE) are enriched in polar residues. Serine 360 carries the post-translational modification Phosphoserine. The segment covering 400-410 (SEGRDSGKEKA) has biased composition (basic and acidic residues). Phosphoserine is present on residues serine 425 and serine 443. Residues 454–633 (ESSLQTVDLS…VSIGPVGKSK (180 aa)) form a disordered region. Residues 471-481 (TDVKVKEESKP) are compositionally biased toward basic and acidic residues. The span at 510 to 522 (KDSSCQTSNSVEK) shows a compositional bias: polar residues. A Phosphothreonine modification is found at threonine 523. Serine 525 carries the post-translational modification Phosphoserine. Basic and acidic residues predominate over residues 537 to 555 (KNKETSSSKDKKSVDKKSA). 2 positions are modified to phosphoserine: serine 601 and serine 615. The segment at 614 to 633 (MSDAQVQTDPVSIGPVGKSK) is interacts with DYNLL1 AND DYNLL2.

As to quaternary structure, homodimer. Interacts with DYNLL1 and DYNLL2. In terms of tissue distribution, highly expressed in the brain and, more specifically, in oligodendrocytes. Expressed in the Schwann cells (at protein level).

It localises to the cytoplasm. Functionally, required for myelination. The chain is Breast carcinoma-amplified sequence 1 homolog (Bcas1) from Mus musculus (Mouse).